Here is a 338-residue protein sequence, read N- to C-terminus: MNLPERSRFVIYAVGIFVCYFLYGIVQEKLTRGRYGEEVQTDGSVGERFTYALALVWVQCLCNYVFAKVLLTIRPQKEDTTNAGSYVACSLTYLLAMVSTNMAMRWVPYPTAVVGKSAKPIPVMILGVLIGRKSYSWTRYACVLTIVLGVILFMYKEGKVSNLPAETTLLGEVLLFLSLSMDGLTGAVQERIRAASAPSGQQMMRAMNFWSTLMLGVAMVFTGEAKEFMYFTIRHPEAWTHLSLIAVCGVLGQFFIFLMVASFGPLACSVVTTTRKFFTVLCSVLLFGNVLIARQWLGAVLVFAALFVDMLYGKKAPLATAKKPPVEGKLSEEKKLNS.

The next 9 helical transmembrane spans lie at 9 to 29 (FVIY…VQEK), 53 to 73 (LALV…LLTI), 84 to 104 (GSYV…NMAM), 111 to 131 (TAVV…VLIG), 135 to 155 (YSWT…LFMY), 168 to 188 (TLLG…TGAV), 213 to 233 (LMLG…YFTI), 244 to 264 (LIAV…ASFG), and 284 to 304 (VLLF…LVFA). A Di-lysine motif motif is present at residues 334–338 (KKLNS).

Belongs to the nucleotide-sugar transporter family. SLC35B subfamily.

The protein resides in the endoplasmic reticulum membrane. Functionally, probable sugar transporter. The chain is Solute carrier family 35 member B1 homolog (meigo) from Drosophila melanogaster (Fruit fly).